A 185-amino-acid chain; its full sequence is Tetratricopeptide repeat protein 36 homolog (185 aa).

3 TPR repeats span residues 53–86 (SRELELKAIALSESGELDGALELFQQSLNLAQRA), 88–119 (VLNNRAQTLRLAKRDEEALDDLNKALELANDQ), and 125–158 (CHAHCQRGVLYRKLDNLEAARADFEAAAQLGSKF).

It belongs to the TTC36 family.

The polypeptide is Tetratricopeptide repeat protein 36 homolog (Drosophila melanogaster (Fruit fly)).